A 268-amino-acid polypeptide reads, in one-letter code: Secreted RxLR effector protein 32 (268 aa).

Residues 1 to 21 (MRGAYYVAFALLVAASTRTAA) form the signal peptide. The RxLR-dEER signature appears at 50–71 (RILRESPDPKDRLPVYASDEER). The segment at 120-257 (PKLEIKKSKR…PTPESLGIGG (138 aa)) is disordered. Residues 148–161 (SNSKKSLVSSASAK) show a composition bias toward low complexity. A compositionally biased stretch (basic and acidic residues) spans 212 to 224 (NLDKNKRPDEAKI).

Belongs to the RxLR effector family.

It is found in the secreted. Its subcellular location is the host cell. Functionally, secreted effector that completely suppresses the host cell death induced by cell death-inducing proteins. This is Secreted RxLR effector protein 32 from Plasmopara viticola (Downy mildew of grapevine).